A 458-amino-acid polypeptide reads, in one-letter code: Flavohemoprotein (458 aa).

The region spanning 2–158 (TLSEDTLRAV…LADLFIKREE (157 aa)) is the Globin domain. His-107 lines the heme b pocket. Catalysis depends on charge relay system residues Tyr-117 and Glu-157. Residues 169–457 (GGWRQTRTFR…FEMFGPFKAS (289 aa)) are reductase. Residues 172-279 (RQTRTFRVEE…APPYGDFFLR (108 aa)) enclose the FAD-binding FR-type domain. Residues Tyr-211 and 228–231 (RQYS) each bind FAD. NADP(+) is bound at residue 321–326 (GIGQTP). An FAD-binding site is contributed by 450–453 (MFGP).

Belongs to the globin family. Two-domain flavohemoproteins subfamily. The protein in the C-terminal section; belongs to the flavoprotein pyridine nucleotide cytochrome reductase family. Monomer. Heme b is required as a cofactor. The cofactor is FAD.

The enzyme catalyses 2 nitric oxide + NADPH + 2 O2 = 2 nitrate + NADP(+) + H(+). The catalysed reaction is 2 nitric oxide + NADH + 2 O2 = 2 nitrate + NAD(+) + H(+). In terms of biological role, flavohemoprotein involved in nitric oxide (NO) detoxification in an aerobic process, termed nitric oxide dioxygenase (NOD) reaction that utilizes O(2) and NAD(P)H to convert NO to nitrate, which protects the protozoan parasite from various noxious nitrogen compounds. Therefore, plays a central role in the inducible response to nitrosative stress. May also be involved in O(2) detoxification. The chain is Flavohemoprotein (hmpA) from Giardia intestinalis (strain ATCC 50803 / WB clone C6) (Giardia lamblia).